The primary structure comprises 401 residues: Exodeoxyribonuclease 7 large subunit (401 aa).

It belongs to the XseA family. Heterooligomer composed of large and small subunits.

Its subcellular location is the cytoplasm. It carries out the reaction Exonucleolytic cleavage in either 5'- to 3'- or 3'- to 5'-direction to yield nucleoside 5'-phosphates.. Bidirectionally degrades single-stranded DNA into large acid-insoluble oligonucleotides, which are then degraded further into small acid-soluble oligonucleotides. The polypeptide is Exodeoxyribonuclease 7 large subunit (Clostridium botulinum (strain Loch Maree / Type A3)).